Reading from the N-terminus, the 81-residue chain is Protein translocase subunit SecE (81 aa).

A helical transmembrane segment spans residues 50–70 (VAVILMVILVSTVIYFVDQIF).

It belongs to the SecE/SEC61-gamma family. As to quaternary structure, component of the Sec protein translocase complex. Heterotrimer consisting of SecY, SecE and SecG subunits. The heterotrimers can form oligomers, although 1 heterotrimer is thought to be able to translocate proteins. Interacts with the ribosome. Interacts with SecDF, and other proteins may be involved. Interacts with SecA.

The protein localises to the cell inner membrane. Its subcellular location is the cellular thylakoid membrane. In terms of biological role, essential subunit of the Sec protein translocation channel SecYEG. Clamps together the 2 halves of SecY. May contact the channel plug during translocation. The polypeptide is Protein translocase subunit SecE (Synechocystis sp. (strain ATCC 27184 / PCC 6803 / Kazusa)).